A 155-amino-acid chain; its full sequence is 6,7-dimethyl-8-ribityllumazine synthase (155 aa).

5-amino-6-(D-ribitylamino)uracil is bound by residues phenylalanine 22, 56–58, and 80–82; these read AFE and AVI. 85–86 serves as a coordination point for (2S)-2-hydroxy-3-oxobutyl phosphate; sequence AT. Histidine 88 acts as the Proton donor in catalysis. Phenylalanine 113 serves as a coordination point for 5-amino-6-(D-ribitylamino)uracil. Position 127 (arginine 127) interacts with (2S)-2-hydroxy-3-oxobutyl phosphate.

Belongs to the DMRL synthase family.

The enzyme catalyses (2S)-2-hydroxy-3-oxobutyl phosphate + 5-amino-6-(D-ribitylamino)uracil = 6,7-dimethyl-8-(1-D-ribityl)lumazine + phosphate + 2 H2O + H(+). It functions in the pathway cofactor biosynthesis; riboflavin biosynthesis; riboflavin from 2-hydroxy-3-oxobutyl phosphate and 5-amino-6-(D-ribitylamino)uracil: step 1/2. Catalyzes the formation of 6,7-dimethyl-8-ribityllumazine by condensation of 5-amino-6-(D-ribitylamino)uracil with 3,4-dihydroxy-2-butanone 4-phosphate. This is the penultimate step in the biosynthesis of riboflavin. The sequence is that of 6,7-dimethyl-8-ribityllumazine synthase from Clostridium acetobutylicum (strain ATCC 824 / DSM 792 / JCM 1419 / IAM 19013 / LMG 5710 / NBRC 13948 / NRRL B-527 / VKM B-1787 / 2291 / W).